The sequence spans 91 residues: Non-specific lipid-transfer protein 1 (91 aa).

Cystine bridges form between cysteine 4–cysteine 51, cysteine 14–cysteine 28, cysteine 29–cysteine 74, and cysteine 49–cysteine 88.

As to expression, detected in seeds (at protein level).

In terms of biological role, plant non-specific lipid-transfer proteins transfer phospholipids as well as galactolipids across membranes. May play a role in wax or cutin deposition in the cell walls of expanding epidermal cells and certain secretory tissues. The polypeptide is Non-specific lipid-transfer protein 1 (Trachyspermum ammi (Ajowan caraway)).